The following is a 130-amino-acid chain: Phosphoribosyl-AMP cyclohydrolase (130 aa).

Residue Asp80 coordinates Mg(2+). Zn(2+) is bound at residue Cys81. Mg(2+) is bound by residues Asp82 and Asp84. Cys98 and Cys105 together coordinate Zn(2+).

The protein belongs to the PRA-CH family. As to quaternary structure, homodimer. The cofactor is Mg(2+). Zn(2+) is required as a cofactor.

It localises to the cytoplasm. It catalyses the reaction 1-(5-phospho-beta-D-ribosyl)-5'-AMP + H2O = 1-(5-phospho-beta-D-ribosyl)-5-[(5-phospho-beta-D-ribosylamino)methylideneamino]imidazole-4-carboxamide. The protein operates within amino-acid biosynthesis; L-histidine biosynthesis; L-histidine from 5-phospho-alpha-D-ribose 1-diphosphate: step 3/9. Catalyzes the hydrolysis of the adenine ring of phosphoribosyl-AMP. In Oleidesulfovibrio alaskensis (strain ATCC BAA-1058 / DSM 17464 / G20) (Desulfovibrio alaskensis), this protein is Phosphoribosyl-AMP cyclohydrolase.